The primary structure comprises 702 residues: Polyribonucleotide nucleotidyltransferase (702 aa).

Mg(2+) contacts are provided by Asp485 and Asp491. The KH domain occupies 552-611 (PKTSTLQIDPEKIRDVIGAGGKVINKIIADTGVKIDIKEDGLVYVSSAESEGVKEAVKII). Residues 621–689 (GEIYLGKVTK…SQGRINLSRK (69 aa)) enclose the S1 motif domain.

The protein belongs to the polyribonucleotide nucleotidyltransferase family. Mg(2+) is required as a cofactor.

Its subcellular location is the cytoplasm. It catalyses the reaction RNA(n+1) + phosphate = RNA(n) + a ribonucleoside 5'-diphosphate. Functionally, involved in mRNA degradation. Catalyzes the phosphorolysis of single-stranded polyribonucleotides processively in the 3'- to 5'-direction. This Clostridium perfringens (strain 13 / Type A) protein is Polyribonucleotide nucleotidyltransferase.